Reading from the N-terminus, the 979-residue chain is Putative disease resistance protein RGA1 (979 aa).

One can recognise an NB-ARC domain in the interval 143–437 (GSVLTEPQVY…MAHGFLLSKG (295 aa)). ATP is bound at residue 182–189 (GMGGLGKT). LRR repeat units lie at residues 524–547 (FVSL…IGDL), 549–570 (HLRY…RLCK), 571–594 (LQNL…QTSK), 595–619 (LGSL…GLLT), 637–661 (LGEL…KKDT), 748–773 (LPCL…VHPG), 823–841 (VKTL…SISN), 842–866 (LRAL…MFKS), 868–890 (ANLK…SLAS), 891–915 (LNAL…GVKG), 917–939 (TSLT…GLQH), and 940–965 (LTAL…IGED).

Belongs to the disease resistance NB-LRR family.

Its function is as follows. Disease resistance protein. Resistance proteins guard the plant against pathogens that contain an appropriate avirulence protein via a direct or indirect interaction with this avirulence protein. That triggers a defense system which restricts the pathogen growth. This chain is Putative disease resistance protein RGA1 (RGA1), found in Solanum bulbocastanum (Wild potato).